The chain runs to 158 residues: Large ribosomal subunit protein uL15 (158 aa).

The segment covering 1-13 (MKLNEIKDNEGST) has biased composition (basic and acidic residues). A disordered region spans residues 1 to 45 (MKLNEIKDNEGSTHSRKRLGRGIGSGSGKTGGRGVKGQKSRSGVA). A compositionally biased stretch (gly residues) spans 21–35 (RGIGSGSGKTGGRGV).

This sequence belongs to the universal ribosomal protein uL15 family. In terms of assembly, part of the 50S ribosomal subunit.

In terms of biological role, binds to the 23S rRNA. In Rhizobium etli (strain CIAT 652), this protein is Large ribosomal subunit protein uL15.